The following is a 1077-amino-acid chain: Mitogen-activated protein kinase kinase kinase 9 (1077 aa).

Positions 1 to 40 (MESSRSLLGCLASATAAPPGDDATGAGAEEEEDEEEAAAE) are disordered. Residues 14-27 (ATAAPPGDDATGAG) are compositionally biased toward low complexity. A compositionally biased stretch (acidic residues) spans 28–38 (AEEEEDEEEAA). Residues 45–109 (AALPYWTAVF…PSNYVTPRSA (65 aa)) form the SH3 domain. The 269-residue stretch at 137 to 405 (LTLEEIIGIG…LTTIEESGFF (269 aa)) folds into the Protein kinase domain. ATP-binding positions include 143–151 (IGIGGFGKV) and Lys164. The Proton acceptor role is filled by Asp261. Phosphothreonine; by autocatalysis is present on residues Thr297 and Thr298. Residue Ser301 is modified to Phosphoserine; by autocatalysis. A Phosphothreonine; by autocatalysis modification is found at Thr305. Leucine-zipper regions lie at residues 423 to 444 (IQEM…EEEL) and 458 to 479 (LRRR…ELNI). Basic residues predominate over residues 491–503 (VKKRKGKFRKSRL). Disordered regions lie at residues 491 to 511 (VKKR…GNRI), 526 to 606 (SPTM…TSGD), 646 to 713 (EDED…KRGG), 748 to 790 (LPPE…KKEE), 860 to 971 (RDPN…PRPS), and 986 to 1011 (SHAR…CFAS). Position 526 is a phosphoserine (Ser526). Composition is skewed to polar residues over residues 559 to 568 (PGESSKTWGR) and 693 to 709 (PVNS…TNSL). Residues 755–767 (PPAREEKKRREGL) show a composition bias toward basic and acidic residues. Polar residues predominate over residues 863 to 880 (NQSLTPTHVTLTAPTQPS). Residues 901-915 (GSRSPSSNGMSPSPG) show a composition bias toward low complexity. A compositionally biased stretch (polar residues) spans 987-1011 (HARSASPANSSSTETPSNLDSCFAS).

Belongs to the protein kinase superfamily. STE Ser/Thr protein kinase family. MAP kinase kinase kinase subfamily. As to quaternary structure, homodimer. The cofactor is Mg(2+). Autophosphorylation on serine and threonine residues within the activation loop plays a role in enzyme activation. Thr-305 is likely to be the main autophosphorylation site. Autophosphorylation also occurs on Thr-297 and Ser-301. Expressed in cochlea and utricle.

The enzyme catalyses L-seryl-[protein] + ATP = O-phospho-L-seryl-[protein] + ADP + H(+). It catalyses the reaction L-threonyl-[protein] + ATP = O-phospho-L-threonyl-[protein] + ADP + H(+). Its activity is regulated as follows. Homodimerization via the leucine zipper domains is required for autophosphorylation of multiple sites in the activation loop and subsequent activation. Autophosphorylation at Thr-305 is the key step in activation of MAP3K9/MLK1 and is required for full phosphorylation. Autophosphorylation at Thr-297 and Ser-301 have been shown to be of secondary importance in the activation of MAP3K9/MLK1. Serine/threonine kinase which acts as an essential component of the MAP kinase signal transduction pathway. Plays an important role in the cascades of cellular responses evoked by changes in the environment. Once activated, acts as an upstream activator of the MKK/JNK signal transduction cascade through the phosphorylation of MAP2K4/MKK4 and MAP2K7/MKK7 which in turn activate the JNKs. The MKK/JNK signaling pathway regulates stress response via activator protein-1 (JUN) and GATA4 transcription factors. Also plays a role in mitochondrial death signaling pathway, including the release cytochrome c, leading to apoptosis. The protein is Mitogen-activated protein kinase kinase kinase 9 (Map3k9) of Mus musculus (Mouse).